Consider the following 540-residue polypeptide: Dynein axonemal assembly factor 3 homolog (540 aa).

The segment at 480–499 is disordered; sequence AVTEAMPESTFKYDTDTDYG.

Belongs to the DNAAF3 family. Expressed in mechanosensory chordotonal (Ch) neurons, spermatocytes and spermatids (at protein level).

The protein resides in the cytoplasm. Its subcellular location is the dynein axonemal particle. Its function is as follows. Required for the assembly of axonemal inner and outer dynein arms. Involved in the cytoplasmic preassembly of dyneins into complexes before their transport into cilia. Essential for the development of axonemal dynein motors in the sensory cilium of mechanosensory chordotonal (Ch) neurons and sperm flagellum, and consequently, is required for the mechanotransduction process of hearing and sperm mobility. This is Dynein axonemal assembly factor 3 homolog from Drosophila melanogaster (Fruit fly).